A 517-amino-acid polypeptide reads, in one-letter code: GMP synthase [glutamine-hydrolyzing] (517 aa).

A Glutamine amidotransferase type-1 domain is found at 9-199; it reads RILILDFGSQ…VLNVCGCEGL (191 aa). Cys86 functions as the Nucleophile in the catalytic mechanism. Active-site residues include His173 and Glu175. Residues 200 to 392 form the GMPS ATP-PPase domain; the sequence is WTSASIIEDA…LGLPYNMLYR (193 aa). Residue 227–233 participates in ATP binding; it reads SGGVDSS.

As to quaternary structure, homodimer.

The catalysed reaction is XMP + L-glutamine + ATP + H2O = GMP + L-glutamate + AMP + diphosphate + 2 H(+). Its pathway is purine metabolism; GMP biosynthesis; GMP from XMP (L-Gln route): step 1/1. Catalyzes the synthesis of GMP from XMP. In Aliivibrio fischeri (strain MJ11) (Vibrio fischeri), this protein is GMP synthase [glutamine-hydrolyzing].